We begin with the raw amino-acid sequence, 306 residues long: Mitochondrial basic amino acids transporter (306 aa).

Helical transmembrane passes span 2–22 (ALDF…GHPF), 61–81 (GLGS…GVQG), 96–116 (FLAG…MELA), 153–172 (GMVS…FLTY), 187–207 (LLVP…WLST), and 255–275 (LLRA…VLTY). 3 Solcar repeats span residues 2–86 (ALDF…TLRA), 90–178 (DSPL…MTRA), and 190–275 (PKLL…VLTY). The interval 284-306 (DSEAALGTSPTPAGSALAQPSSL) is disordered. Polar residues predominate over residues 291–306 (TSPTPAGSALAQPSSL).

The protein belongs to the mitochondrial carrier (TC 2.A.29) family. As to expression, widely expressed, with highest levels in the brain, including cortex, cerebellum, hippocampus and hypothalamus, and moderate levels in liver, kidney, heart and testis.

Its subcellular location is the mitochondrion inner membrane. It catalyses the reaction L-lysine(out) + L-arginine(in) = L-lysine(in) + L-arginine(out). It carries out the reaction L-histidine(out) + L-arginine(in) = L-histidine(in) + L-arginine(out). The catalysed reaction is L-ornithine(in) + L-arginine(out) = L-ornithine(out) + L-arginine(in). The enzyme catalyses L-homoarginine(in) + L-arginine(out) = L-homoarginine(out) + L-arginine(in). It catalyses the reaction N(omega)-methyl-L-arginine(in) + L-arginine(out) = N(omega)-methyl-L-arginine(out) + L-arginine(in). It carries out the reaction L-arginine(in) = L-arginine(out). The catalysed reaction is L-lysine(in) = L-lysine(out). The enzyme catalyses L-ornithine(in) = L-ornithine(out). It catalyses the reaction L-histidine(out) = L-histidine(in). Mitochondrial transporter of arginine, lysine, homoarginine, methylarginine. Transports with a much lesser extent, ornithine and histidine. Does not transport carnitine nor acylcarnitines. Functions by both counter-exchange and uniport mechanisms. Plays a physiological role in the import of basic amino acids into mitochondria for mitochondrial protein synthesis and amino acid degradation. The sequence is that of Mitochondrial basic amino acids transporter (Slc25a29) from Mus musculus (Mouse).